The following is a 192-amino-acid chain: ATP-dependent Clp protease proteolytic subunit 1 (192 aa).

Residue serine 92 is the Nucleophile of the active site. Histidine 117 is an active-site residue.

Belongs to the peptidase S14 family. Fourteen ClpP subunits assemble into 2 heptameric rings which stack back to back to give a disk-like structure with a central cavity, resembling the structure of eukaryotic proteasomes.

Its subcellular location is the cytoplasm. It carries out the reaction Hydrolysis of proteins to small peptides in the presence of ATP and magnesium. alpha-casein is the usual test substrate. In the absence of ATP, only oligopeptides shorter than five residues are hydrolyzed (such as succinyl-Leu-Tyr-|-NHMec, and Leu-Tyr-Leu-|-Tyr-Trp, in which cleavage of the -Tyr-|-Leu- and -Tyr-|-Trp bonds also occurs).. Its function is as follows. Cleaves peptides in various proteins in a process that requires ATP hydrolysis. Has a chymotrypsin-like activity. Plays a major role in the degradation of misfolded proteins. The chain is ATP-dependent Clp protease proteolytic subunit 1 from Chlamydia muridarum (strain MoPn / Nigg).